A 428-amino-acid chain; its full sequence is A-kinase anchor protein 5 (428 aa).

Residues 1–170 (MEITVSEIQV…VTKTQTQSDD (170 aa)) form an essential to the intracellular anchoring function region. Disordered stretches follow at residues 1-207 (MEIT…SPGE) and 237-313 (LEEK…TELS). Basic and acidic residues predominate over residues 10–32 (VESKDETRSAEVRPQDERQEEKA). C36 is lipidated: S-palmitoyl cysteine. Positions 37–48 (FKRRKKAAKAMK) are enriched in basic residues. Over residues 57–68 (DAAKKCPPEARA) the composition is skewed to basic and acidic residues. The AKAP CaM-binding motif lies at 76–96 (GGAWDSIKRLVTRRKRSESSK). T87 carries the phosphothreonine; by PKC modification. S92 is modified (phosphoserine; by PKA). Phosphoserine; by PKC is present on S94. C129 is lipidated: S-palmitoyl cysteine. Residues 133-156 (SKGEKRSNHSKIIEDSDRSVKVQE) are compositionally biased toward basic and acidic residues. Polar residues predominate over residues 161-170 (VTKTQTQSDD). 2 stretches are compositionally biased toward basic and acidic residues: residues 171–191 (QATKSKSPQDVREDVSQKGDD) and 290–311 (PDWKEHESREIVVEESKPKDTE). The RII-beta subunit binding domain stretch occupies residues 389 to 410 (YETLLIETASSLVKNAIQLSIE). Residues 411-428 (QLVNEMASDDNTINNRLQ) are tethers NFATC2 to CRAC channels.

As to quaternary structure, binding protein for dimer of the RII-beta regulatory subunit of cAMP-dependent protein kinase (PKA) and also for the protein kinase C (PKC) and the phosphatase calcineurin (PP2B). Each enzyme is inhibited when bound to the anchoring protein. Also binds the beta2-adrenergic receptor. Part of a complex containing AKAP5, ADCY5, ADCY6 and PDE4C. Interacts with ADCY8, and enhances its phosphorylation at lipid rafts. Interacts with ORAI1 (isoform alpha) (via N-terminus) upon store depletion and in response to LTC4. Does not interact with ORAI2 and ORAI3 paralogs. Interacts (via leucine zipper domain) with NFATC2/NFAT1. Interacts with calmodulin; the interaction is calcium-independent. Interacts with KCNQ2; the interaction may help KCNQ2 channel complex to retain calcium-bound calmodulin. Palmitoylated. Palmitoylation at Cys-36 and Cys-129 play a key role in the targeting of AKAP5 to lipid rafts. Palmitoylation by ZDHHC2 is required for AKAP5 function in LTP-stimulated recycling endosome exocytosis. As to expression, predominantly in brain, and to a lesser extent in adrenal medulla, lung and anterior pituitary.

It is found in the postsynaptic recycling endosome membrane. Functionally, multivalent scaffold protein that anchors the cAMP-dependent protein kinase/PKA to cytoskeletal and/or organelle-associated proteins, targeting the signal carried by cAMP to specific intracellular effectors. Association with the beta2-adrenergic receptor (beta2-AR) not only regulates beta2-AR signaling pathway, but also the activation by PKA by switching off the beta2-AR signaling cascade. Plays a role in long term synaptic potentiation by regulating protein trafficking from the dendritic recycling endosomes to the plasma membrane and controlling both structural and functional plasticity at excitatory synapses. Associates with ORAI1 pore-forming subunit of CRAC channels in Ca(2+) signaling microdomains where it recruits NFATC2/NFAT1 and couples store-operated Ca(2+) influx to calmodulin and calcineurin signaling and activation of NFAT-dependent transcriptional responses. The sequence is that of A-kinase anchor protein 5 (AKAP5) from Bos taurus (Bovine).